Here is a 367-residue protein sequence, read N- to C-terminus: Pre-small/secreted glycoprotein (367 aa).

The signal sequence occupies residues 1-33 (MGSGYQLLQLPRERFRKTSFLVWVIILFQRAIS). N-linked (GlcNAc...) asparagine; by host glycosylation occurs at N41. Disulfide bonds link C109–C136 and C122–C148. 4 N-linked (GlcNAc...) asparagine; by host glycosylation sites follow: N205, N239, N258, and N269.

Belongs to the filoviruses glycoprotein family. In terms of assembly, homodimer; disulfide-linked. The homodimers are linked by two disulfide bonds in a parallel orientation. As to quaternary structure, monomer. Post-translationally, this precursor is processed into mature sGP and delta-peptide by host furin or furin-like proteases. The cleavage site corresponds to the furin optimal cleavage sequence [KR]-X-[KR]-R. In terms of processing, N-glycosylated. O-glycosylated.

It localises to the secreted. Seems to possess an anti-inflammatory activity as it can reverse the barrier-decreasing effects of TNF alpha. Might therefore contribute to the lack of inflammatory reaction seen during infection in spite the of extensive necrosis and massive virus production. Does not seem to be involved in activation of primary macrophages. Does not seem to interact specifically with neutrophils. Its function is as follows. Viroporin that permeabilizes mammalian cell plasma membranes. It acts by altering permeation of ionic compounds and small molecules. This activity may lead to viral enterotoxic activity. The protein is Pre-small/secreted glycoprotein (GP) of Reston ebolavirus (strain Philippines-96) (REBOV).